Here is a 257-residue protein sequence, read N- to C-terminus: MEFVDEKRYRKIKNGVGRAVADFNLIEEGDRIAVAVSGGKDSYTLLHILEALRRRAPVKYDLVAFTIDSGYPGFRSDVIAAHLKEHGFSHHVEATTHYDIIKEKRRPGSSYCSICARLKRGVLYTLAQQHGCNKLALGHHLDDFVETLLLNQFFVGTLKAMAPRMLADNGATTVIRPLVYVEEREIIPFARENSFPVVCCCCPVCGKADIQRKRMKELLKELERENPAVKRSLLRALANVQPRHLLDRELQRVCEVP.

Residues 37-42 (SGGKDS) carry the PP-loop motif motif. [4Fe-4S] cluster is bound by residues Cys112, Cys115, and Cys202.

This sequence belongs to the TtcA family. Homodimer. Mg(2+) serves as cofactor. The cofactor is [4Fe-4S] cluster.

It localises to the cytoplasm. It catalyses the reaction cytidine(32) in tRNA + S-sulfanyl-L-cysteinyl-[cysteine desulfurase] + AH2 + ATP = 2-thiocytidine(32) in tRNA + L-cysteinyl-[cysteine desulfurase] + A + AMP + diphosphate + H(+). The protein operates within tRNA modification. Catalyzes the ATP-dependent 2-thiolation of cytidine in position 32 of tRNA, to form 2-thiocytidine (s(2)C32). The sulfur atoms are provided by the cysteine/cysteine desulfurase (IscS) system. This Geobacter metallireducens (strain ATCC 53774 / DSM 7210 / GS-15) protein is tRNA-cytidine(32) 2-sulfurtransferase.